The chain runs to 507 residues: Probable DNA ligase (507 aa).

E209 serves as a coordination point for ATP. The active-site N6-AMP-lysine intermediate is the K211. R216, R231, E260, F295, R366, and K372 together coordinate ATP.

The protein belongs to the ATP-dependent DNA ligase family. It depends on Mg(2+) as a cofactor.

The catalysed reaction is ATP + (deoxyribonucleotide)n-3'-hydroxyl + 5'-phospho-(deoxyribonucleotide)m = (deoxyribonucleotide)n+m + AMP + diphosphate.. Its function is as follows. DNA ligase that seals nicks in double-stranded DNA during DNA replication, DNA recombination and DNA repair. The polypeptide is Probable DNA ligase (Pseudarthrobacter chlorophenolicus (strain ATCC 700700 / DSM 12829 / CIP 107037 / JCM 12360 / KCTC 9906 / NCIMB 13794 / A6) (Arthrobacter chlorophenolicus)).